The primary structure comprises 207 residues: MPQRKISFYRLLPLATLLLAACSTTPPSGPATSPTSPQWRQHEQQLRQLSQFQTRGAFAYLSEKQKVYARFFWQQTAPERYRLLLTNPLGSTELELVVQPGVTQLTDNQGKRHVSNDPQEMIQKLTGMSIPLESLRQWILGLPGDTTDFTLDDKYRLKQLTYQQDGVTWVVDYQEYNTQVTPALPSRMELSQGGQRIKLKMDNWTVK.

A signal peptide spans 1–21; the sequence is MPQRKISFYRLLPLATLLLAA. Cys22 is lipidated: N-palmitoyl cysteine. A lipid anchor (S-diacylglycerol cysteine) is attached at Cys22.

The protein belongs to the LolB family. In terms of assembly, monomer.

It is found in the cell outer membrane. Plays a critical role in the incorporation of lipoproteins in the outer membrane after they are released by the LolA protein. The protein is Outer-membrane lipoprotein LolB of Yersinia enterocolitica serotype O:8 / biotype 1B (strain NCTC 13174 / 8081).